A 101-amino-acid polypeptide reads, in one-letter code: uncharacterized protein (101 aa).

This is an uncharacterized protein from Bacillus subtilis (strain 168).